Here is a 120-residue protein sequence, read N- to C-terminus: MTENRRIKRVNALLQEAIAKVILKDVKHPKISNLWITVTRVSLSKDLHSARVYVSVMPHENTKEEALEALKVSAGFIAHRASKNVVLKYFPELHFYLDDIFSPQDYIENLLWQIQEKEKS.

This sequence belongs to the RbfA family. Monomer. Binds 30S ribosomal subunits, but not 50S ribosomal subunits or 70S ribosomes.

It localises to the cytoplasm. One of several proteins that assist in the late maturation steps of the functional core of the 30S ribosomal subunit. Associates with free 30S ribosomal subunits (but not with 30S subunits that are part of 70S ribosomes or polysomes). Required for efficient processing of 16S rRNA. May interact with the 5'-terminal helix region of 16S rRNA. The chain is Ribosome-binding factor A from Chlamydia pneumoniae (Chlamydophila pneumoniae).